The following is a 534-amino-acid chain: Origin of replication complex subunit 5 (534 aa).

Residues 1-36 are disordered; the sequence is MPPKEESSKVTRRSTRSSASVTVENSEPIESHTPTI. 83-90 contributes to the ATP binding site; that stretch reads GGASTGKT. The short motif at 129–136 is the Nuclear localization signal element; sequence HRKCSLNG. Positions 397-428 are disordered; it reads MFDSTGGMDNRKRKRKASEKSMEKKEIAEQEA. Residues 414–424 show a composition bias toward basic and acidic residues; that stretch reads SEKSMEKKEIA.

The protein belongs to the ORC5 family. As to quaternary structure, component of the origin recognition complex (ORC) composed of at least ORC1 (ORC1A or ORC1B), ORC2, ORC3, ORC4, ORC5 and ORC6. ORC is regulated in a cell-cycle and development dependent manner. It is sequentially assembled at the exit from anaphase of mitosis and disassembled as cells enter S phase. Interacts directly with ORC1A, ORC1B, ORC2, ORC3, ORC4 and ORC6. In terms of tissue distribution, follow a cell-cycle regulation with a peak at the G1/S-phase. Mostly expressed in flower buds and cauline leaves, and, to a lower exent, in roots, leaves and stems. Expressed at low levels ubiquitously.

The protein resides in the nucleus. Functionally, component of the origin recognition complex (ORC) that binds origins of replication. DNA-binding is ATP-dependent. The specific DNA sequences that define origins of replication have not been identified yet. ORC is required to assemble the pre-replication complex necessary to initiate DNA replication. This chain is Origin of replication complex subunit 5, found in Arabidopsis thaliana (Mouse-ear cress).